The chain runs to 885 residues: Exosome complex component 10 (885 aa).

A Glycyl lysine isopeptide (Lys-Gly) (interchain with G-Cter in SUMO2) cross-link involves residue lysine 19. The region spanning 289–455 is the 3'-5' exonuclease domain; sequence HFISSLDELV…YIYDKMRLEM (167 aa). Positions 313, 315, 371, and 440 each coordinate Mg(2+). Residues 503–583 form the HRDC domain; sequence NTQQLTAFQL…QQAREMPLLK (81 aa). A Glycyl lysine isopeptide (Lys-Gly) (interchain with G-Cter in SUMO1); alternate cross-link involves residue lysine 583. Lysine 583 is covalently cross-linked (Glycyl lysine isopeptide (Lys-Gly) (interchain with G-Cter in SUMO2); alternate). Lysine 710 is covalently cross-linked (Glycyl lysine isopeptide (Lys-Gly) (interchain with G-Cter in SUMO2)). Composition is skewed to basic and acidic residues over residues 776-794 and 804-816; these read AAKK…EQKQ and KPKD…KEFT. The disordered stretch occupies residues 776 to 885; sequence AAKKRERATS…RGFRYNWPQR (110 aa). Serine 821 carries the phosphoserine modification. Residues lysine 826, lysine 833, and lysine 859 each participate in a glycyl lysine isopeptide (Lys-Gly) (interchain with G-Cter in SUMO2) cross-link. Residues 831-848 show a composition bias toward polar residues; sequence NSKSKVSSQFDPNKQTPS. Polar residues predominate over residues 861–871; it reads SVGNKSMSFPT. Lysine 873 is covalently cross-linked (Glycyl lysine isopeptide (Lys-Gly) (interchain with G-Cter in SUMO2)).

It belongs to the exosome component 10/RRP6 family. Component of the RNA exosome complex. The catalytically inactive RNA exosome core complex (Exo-9) associates with the catalytic subunit EXOSC10/RRP6 (via its N-terminus). Exo-9 may associate with DIS3 to form the nucleolar exosome complex, or DIS3L to form the cytoplasmic exosome complex. The RNA exosome complex interacts with cofactors C1D/RRP47, MPHOSPH6/MPP6 and MTREX/MTR4. Interacts with MTREX; the interaction with MTREX mediates the association of MTREX with nuclear RNA exosomes. Part of the small subunit (SSU) processome, composed of more than 70 proteins and the RNA chaperone small nucleolar RNA (snoRNA) U3. Interacts with ALYREF/THOC4. Interacts with DHX36; this interaction occurs in a RNase-insensitive manner. Interacts with NRDE2. Interacts (via C-terminus) with USP36 (via C-terminus); the interaction is facilitated by the association with RNA and promotes sumoylation of EXOSC10. The cofactor is Mg(2+). In terms of processing, sumoylated by USP36; sumoylation does not significantly affect EXOSC10 nucleolar localization and association with core exosome and USP36, but regulates the nucleolar RNA exosome activity in rRNA processing by promoting binding of EXOSC10 to pre-rRNAs. Effects of sumoylation on EXOSC10 levels vary between different studies. Sumoylation of EXOSC10 is required for the modulation of EXOSC10 effects on cellular protein translation and cell proliferation. Sumoylation is promoted by mild hypothermia.

The protein localises to the cytoplasm. Its subcellular location is the nucleus. It localises to the nucleolus. The protein resides in the nucleoplasm. Its activity is regulated as follows. Arginine-rich dipeptide repeat proteins expressed from C9orf72-derived repeat RNA interact with EXOSC10 and inhibit its ability to promote degradation of this RNA. Its function is as follows. Catalytic component of the RNA exosome complex which has 3'-&gt;5' exoribonuclease activity and participates in a multitude of cellular RNA processing and degradation events. In the nucleus, the RNA exosome complex is involved in proper maturation of stable RNA species such as rRNA, snRNA and snoRNA, in the elimination of RNA processing by-products and non-coding 'pervasive' transcripts, such as antisense RNA species and promoter-upstream transcripts (PROMPTs), and of mRNAs with processing defects, thereby limiting or excluding their export to the cytoplasm. Part of the small subunit (SSU) processome, first precursor of the small eukaryotic ribosomal subunit. During the assembly of the SSU processome in the nucleolus, many ribosome biogenesis factors, an RNA chaperone and ribosomal proteins associate with the nascent pre-rRNA and work in concert to generate RNA folding, modifications, rearrangements and cleavage as well as targeted degradation of pre-ribosomal RNA by the RNA exosome. The RNA exosome may be involved in Ig class switch recombination (CSR) and/or Ig variable region somatic hypermutation (SHM) by targeting AICDA deamination activity to transcribed dsDNA substrates. In the cytoplasm, the RNA exosome complex is involved in general mRNA turnover and specifically degrades inherently unstable mRNAs containing AU-rich elements (AREs) within their 3' untranslated regions, and in RNA surveillance pathways, preventing translation of aberrant mRNAs. It seems to be involved in degradation of histone mRNA. EXOSC10 is required for nucleolar localization of C1D and probably mediates the association of MTREX, C1D and MPHOSPH6 with the RNA exosome involved in the maturation of 5.8S rRNA. Plays a role in the recruitment of replication protein A complex (RPA) and RAD51 to DNA double-strand breaks caused by irradiation, contributing to DNA repair by homologous recombination. Regulates levels of damage-induced RNAs in order to prevent DNA-RNA hybrid formation at DNA double-strand breaks and limit DNA end resection after damage. Plays a role in oocyte development, maturation and survival. Required for normal testis development and mitotic division of spermatogonia. Plays a role in proper embryo development. Required for global protein translation. Required for cell proliferation. Regulates metabolism of C9orf72-derived repeat RNA that can be translated into toxic dipeptide repeat proteins. This chain is Exosome complex component 10, found in Homo sapiens (Human).